The following is a 530-amino-acid chain: Na(+)/H(+) antiporter NhaB (530 aa).

12 helical membrane-spanning segments follow: residues 13-33 (FLGK…VINP), 34-54 (LVFF…EFIF), 90-110 (LVAN…IYFM), 121-141 (ILIG…TAAF), 145-165 (FLDA…FYAI), 205-225 (LLIH…VGEP), 241-261 (FIIR…LTCI), 306-326 (GLIA…VGLI), 327-347 (GLSV…HSMG), 351-371 (EEAL…AVII), 455-475 (GQAA…QLSY), and 481-501 (MALP…IFFL).

Belongs to the NhaB Na(+)/H(+) (TC 2.A.34) antiporter family.

Its subcellular location is the cell inner membrane. The catalysed reaction is 2 Na(+)(in) + 3 H(+)(out) = 2 Na(+)(out) + 3 H(+)(in). Its function is as follows. Na(+)/H(+) antiporter that extrudes sodium in exchange for external protons. This chain is Na(+)/H(+) antiporter NhaB, found in Aliivibrio fischeri (strain MJ11) (Vibrio fischeri).